We begin with the raw amino-acid sequence, 157 residues long: uncharacterized protein (157 aa).

The 146-residue stretch at L9 to E154 folds into the N-acetyltransferase domain.

This is an uncharacterized protein from Bacillus cereus (strain G9842).